A 545-amino-acid chain; its full sequence is G-protein coupled receptor 161 (545 aa).

The Extracellular portion of the chain corresponds to 1–46; the sequence is MDFVQHALLTASRGALTMSLNSSLSYRKELSNLTATEGGEGGAVSE. 2 N-linked (GlcNAc...) asparagine glycosylation sites follow: Asn-21 and Asn-32. Residues 47 to 67 form a helical membrane-spanning segment; it reads FIAIIIITVLVCLGNLVIVVT. The Cytoplasmic portion of the chain corresponds to 68–80; it reads LYKKSYLLTLSNK. Residues 81 to 101 traverse the membrane as a helical segment; that stretch reads FVFSLTLSNFLLSVLVLPFVV. The Extracellular portion of the chain corresponds to 102-117; that stretch reads TSSIRREWIFGVVWCN. An intrachain disulfide couples Cys-116 to Cys-194. Asn-117 carries an N-linked (GlcNAc...) asparagine glycan. Residues 118 to 139 form a helical membrane-spanning segment; the sequence is FSALLYLLISSASMLTLGVIAI. Topologically, residues 140–159 are cytoplasmic; the sequence is DRYYAVLYPMVYPMKITGNR. The helical transmembrane segment at 160–180 threads the bilayer; the sequence is AVMALVYIWLHSLIGCLPPLF. The Extracellular segment spans residues 181–205; sequence GWSSVEFDEFKWMCVAAWHQEPGYT. Residues 206-226 traverse the membrane as a helical segment; the sequence is IFWQIWCALFPFLIMLVCYGF. Residues 227-285 are Cytoplasmic-facing; it reads IFRVARVKARKVHCGTVVTVEEDSQRSGRKNSSTSTSSSGSRRNALQGVVYSANQCKAL. The chain crosses the membrane as a helical span at residues 286–306; that stretch reads ITILVVIGAFMVTWGPYMVVI. Residues 307–322 are Extracellular-facing; that stretch reads TSEALWGKNCVSPTLE. Residues 323–343 traverse the membrane as a helical segment; sequence TWATWLSFTSAICHPLIYGLW. Residues 344–545 lie on the Cytoplasmic side of the membrane; the sequence is NKTVRKELLG…EGNVLAAEQR (202 aa).

This sequence belongs to the G-protein coupled receptor 1 family.

It is found in the cell projection. Its subcellular location is the cilium membrane. The protein localises to the cell membrane. In terms of biological role, key negative regulator of Shh signaling, which promotes the processing of GLI3 into GLI3R during neural tube development. Recruited by TULP3 and the IFT-A complex to primary cilia and acts as a regulator of the PKA-dependent basal repression machinery in Shh signaling by increasing cAMP levels, leading to promote the PKA-dependent processing of GLI3 into GLI3R and repress the Shh signaling. In presence of SHH, it is removed from primary cilia and is internalized into recycling endosomes, preventing its activity and allowing activation of the Shh signaling. Its ligand is unknown. The sequence is that of G-protein coupled receptor 161 (Gpr161) from Mus musculus (Mouse).